Consider the following 236-residue polypeptide: ATP phosphoribosyltransferase (236 aa).

This sequence belongs to the ATP phosphoribosyltransferase family. Short subfamily. Heteromultimer composed of HisG and HisZ subunits.

It is found in the cytoplasm. It catalyses the reaction 1-(5-phospho-beta-D-ribosyl)-ATP + diphosphate = 5-phospho-alpha-D-ribose 1-diphosphate + ATP. It functions in the pathway amino-acid biosynthesis; L-histidine biosynthesis; L-histidine from 5-phospho-alpha-D-ribose 1-diphosphate: step 1/9. In terms of biological role, catalyzes the condensation of ATP and 5-phosphoribose 1-diphosphate to form N'-(5'-phosphoribosyl)-ATP (PR-ATP). Has a crucial role in the pathway because the rate of histidine biosynthesis seems to be controlled primarily by regulation of HisG enzymatic activity. This is ATP phosphoribosyltransferase (hisG) from Cereibacter sphaeroides (strain ATCC 17023 / DSM 158 / JCM 6121 / CCUG 31486 / LMG 2827 / NBRC 12203 / NCIMB 8253 / ATH 2.4.1.) (Rhodobacter sphaeroides).